We begin with the raw amino-acid sequence, 515 residues long: Heavy metal-associated isoprenylated plant protein 41 (515 aa).

In terms of domain architecture, HMA spans 376-444 (KQRIVLKMDM…KVCMTTIITV (69 aa)). C512 carries the cysteine methyl ester modification. Residue C512 is the site of S-farnesyl cysteine attachment. Positions 513 to 515 (RIL) are cleaved as a propeptide — removed in mature form.

It belongs to the HIPP family.

Its function is as follows. Heavy-metal-binding protein. The protein is Heavy metal-associated isoprenylated plant protein 41 of Arabidopsis thaliana (Mouse-ear cress).